An 86-amino-acid polypeptide reads, in one-letter code: Small nuclear ribonucleoprotein F (86 aa).

In terms of domain architecture, Sm spans asparagine 14–asparagine 86.

It belongs to the snRNP Sm proteins family. SmF/LSm6 subfamily. Component of the Sm core complex, present in spliceosomal snRNP U1, U2, U4/U6 and U5. The core complex contains SMB1, SMD1, SMD2, SMD3, SME1, SMX3 and SMX2 (Sm proteins B, D1, D2, D3, E, F and G, respectively), and is probably a heptameric ring structure. SMX3 specifically interacts with SME1. Belongs to the CWC complex (or CEF1-associated complex), a spliceosome sub-complex reminiscent of a late-stage spliceosome composed of the U2, U5 and U6 snRNAs and at least BUD13, BUD31, BRR2, CDC40, CEF1, CLF1, CUS1, CWC2, CWC15, CWC21, CWC22, CWC23, CWC24, CWC25, CWC27, ECM2, HSH155, IST3, ISY1, LEA1, MSL1, NTC20, PRP8, PRP9, PRP11, PRP19, PRP21, PRP22, PRP45, PRP46, SLU7, SMB1, SMD1, SMD2, SMD3, SMX2, SMX3, SNT309, SNU114, SPP2, SYF1, SYF2, RSE1 and YJU2. Component of the U4/U6-U5 tri-snRNP complex composed of the U4, U6 and U5 snRNAs and at least PRP3, PRP4, PRP6, PRP8, PRP18, PRP31, PRP38, SNU13, SNU23, SNU66, SNU114, SPP381, SMB1, SMD1, SMD2, SMD3, SMX2, SMX3, LSM2, LSM3, LSM4, LSM5, LSM6, LSM7, LSM8, BRR2 and DIB1.

It localises to the nucleus. The protein resides in the cytoplasm. Functionally, plays a role in pre-mRNA splicing as a core component of the spliceosomal U1, U2, U4 and U5 small nuclear ribonucleoproteins (snRNPs), the building blocks of the spliceosome. The chain is Small nuclear ribonucleoprotein F (SMX3) from Saccharomyces cerevisiae (strain ATCC 204508 / S288c) (Baker's yeast).